We begin with the raw amino-acid sequence, 87 residues long: Small ribosomal subunit protein uS17 (87 aa).

It belongs to the universal ribosomal protein uS17 family. As to quaternary structure, part of the 30S ribosomal subunit.

Its function is as follows. One of the primary rRNA binding proteins, it binds specifically to the 5'-end of 16S ribosomal RNA. The polypeptide is Small ribosomal subunit protein uS17 (Bacillus cytotoxicus (strain DSM 22905 / CIP 110041 / 391-98 / NVH 391-98)).